Consider the following 107-residue polypeptide: Universal stress protein B homolog (107 aa).

A run of 2 helical transmembrane segments spans residues 6–23 and 89–106; these read TILF…ARYF and LFIL…SSFI.

The protein belongs to the universal stress protein B family.

The protein localises to the cell inner membrane. The polypeptide is Universal stress protein B homolog (Vibrio atlanticus (strain LGP32) (Vibrio splendidus (strain Mel32))).